A 397-amino-acid polypeptide reads, in one-letter code: MAEVRVDSLEFFKSHWTAWRYLGVAHFRVENWKNLYVFYSIVSNLLVTLCYPVHLGISLFRNRTITEDILNLTTFATCTACSVKCLLYAYNIKDVLEMERLLRLLDERVVGPEQRSIYGQVRVQLRNVLYVFIGIYMPCALFAELSFLFKEERGLMYPAWFPFDWLHSTRNYYIANAYQIVGISFQLLQNYVSDCFPAVVLCLISSHIKMLYNRFEEVGLDPARDAEKDLEACITDHKHILEWAGGSLVRVLFTFQLFSRLFRRIEAFISLPMLIQFTVTALNVCIGLAALVFFVSEPMARMYFIFYSLAMPLQIFPSCFFGTDNEYWFGRLHYAAFSCNWHTQNRSFKRKMMLFVEQSLKKSTAVAGGMMRIHLDTFFSTLKGAYSLFTIIIRMRK.

Topologically, residues 1-36 are cytoplasmic; sequence MAEVRVDSLEFFKSHWTAWRYLGVAHFRVENWKNLY. Residues 37 to 57 form a helical membrane-spanning segment; it reads VFYSIVSNLLVTLCYPVHLGI. Residues 58-68 lie on the Extracellular side of the membrane; it reads SLFRNRTITED. N-linked (GlcNAc...) asparagine glycosylation occurs at Asn-62. The chain crosses the membrane as a helical span at residues 69 to 92; sequence ILNLTTFATCTACSVKCLLYAYNI. Residues 93 to 128 are Cytoplasmic-facing; sequence KDVLEMERLLRLLDERVVGPEQRSIYGQVRVQLRNV. A helical membrane pass occupies residues 129 to 149; that stretch reads LYVFIGIYMPCALFAELSFLF. Over 150 to 179 the chain is Extracellular; sequence KEERGLMYPAWFPFDWLHSTRNYYIANAYQ. A helical transmembrane segment spans residues 180 to 200; the sequence is IVGISFQLLQNYVSDCFPAVV. Residues 201–274 lie on the Cytoplasmic side of the membrane; that stretch reads LCLISSHIKM…IEAFISLPML (74 aa). Residues 275–295 traverse the membrane as a helical segment; that stretch reads IQFTVTALNVCIGLAALVFFV. Residues 296-301 lie on the Extracellular side of the membrane; it reads SEPMAR. Residues 302–322 form a helical membrane-spanning segment; sequence MYFIFYSLAMPLQIFPSCFFG. Over 323–372 the chain is Cytoplasmic; that stretch reads TDNEYWFGRLHYAAFSCNWHTQNRSFKRKMMLFVEQSLKKSTAVAGGMMR. A helical membrane pass occupies residues 373 to 393; the sequence is IHLDTFFSTLKGAYSLFTIII. At 394 to 397 the chain is on the extracellular side; it reads RMRK.

The protein belongs to the insect chemoreceptor superfamily. Heteromeric odorant receptor channel (TC 1.A.69) family. Or2a subfamily. Interacts with Orco. Complexes exist early in the endomembrane system in olfactory sensory neurons (OSNs), coupling these complexes to the conserved ciliary trafficking pathway. As to expression, expressed in neurons of the third antennal segment.

The protein localises to the cell membrane. In terms of biological role, odorant receptor which mediates acceptance or avoidance behavior, depending on its substrates. The odorant receptor repertoire encodes a large collection of odor stimuli that vary widely in identity, intensity, and duration. May form a complex with Orco to form odorant-sensing units, providing sensitive and prolonged odorant signaling and calcium permeability. Involved in the behavioral responses to ethyl acetate, anisole, hexanoic acid, and pyrazines. The polypeptide is Odorant receptor 59a (Or59a) (Drosophila melanogaster (Fruit fly)).